The primary structure comprises 161 residues: Phosphopantetheine adenylyltransferase (161 aa).

The protein belongs to the eukaryotic CoaD family.

The protein resides in the cytoplasm. The enzyme catalyses (R)-4'-phosphopantetheine + ATP + H(+) = 3'-dephospho-CoA + diphosphate. It participates in cofactor biosynthesis; coenzyme A biosynthesis. Its function is as follows. Reversibly transfers an adenylyl group from ATP to 4'-phosphopantetheine, yielding dephospho-CoA (dPCoA) and pyrophosphate. This is Phosphopantetheine adenylyltransferase from Methanosarcina barkeri (strain Fusaro / DSM 804).